Reading from the N-terminus, the 468-residue chain is ATP synthase subunit beta (468 aa).

Position 148 to 155 (glycine 148 to threonine 155) interacts with ATP.

Belongs to the ATPase alpha/beta chains family. As to quaternary structure, F-type ATPases have 2 components, CF(1) - the catalytic core - and CF(0) - the membrane proton channel. CF(1) has five subunits: alpha(3), beta(3), gamma(1), delta(1), epsilon(1). CF(0) has three main subunits: a(1), b(2) and c(9-12). The alpha and beta chains form an alternating ring which encloses part of the gamma chain. CF(1) is attached to CF(0) by a central stalk formed by the gamma and epsilon chains, while a peripheral stalk is formed by the delta and b chains.

Its subcellular location is the cell inner membrane. The enzyme catalyses ATP + H2O + 4 H(+)(in) = ADP + phosphate + 5 H(+)(out). In terms of biological role, produces ATP from ADP in the presence of a proton gradient across the membrane. The catalytic sites are hosted primarily by the beta subunits. The protein is ATP synthase subunit beta of Stenotrophomonas maltophilia (strain R551-3).